We begin with the raw amino-acid sequence, 363 residues long: Des-methyl DIF-1 methyltransferase A (363 aa).

S-adenosyl-L-methionine contacts are provided by G195, D221, D250, L251, and K266. H270 (proton acceptor) is an active-site residue.

Belongs to the class I-like SAM-binding methyltransferase superfamily. Cation-independent O-methyltransferase family. COMT subfamily.

It carries out the reaction (3,5-dichloro-2,4,6-trihydroxyphenyl)hexan-1-one + S-adenosyl-L-methionine = 1-(3,5-dichloro-2,6-dihydroxy-4-methoxyphenyl)hexan-1-one + S-adenosyl-L-homocysteine + H(+). Its function is as follows. O-methyltransferase; part of the gene cluster that mediates the biosynthesis of DIF-1 (Differentiation Inducing Factor-1), a signal molecule involved in the differentiation of pstO (prestalk-O) cells. The three-step process begins with the formation of (2,4,6-trihydroxyphenyl)-1-hexan-1-one (THPH) by the polyketide synthase StlB. THPH is then dichlorinated by the flavin-dependent halogenase ChlA. The last step of DIF-1 biosynthesis is the O-methylation of dichloro-THPH (or des-methyl-DIF-1) by the methyltransferase DmtA to yield DIF-1. This chain is Des-methyl DIF-1 methyltransferase A, found in Dictyostelium discoideum (Social amoeba).